Here is a 329-residue protein sequence, read N- to C-terminus: GTPase Obg (329 aa).

Positions 1-159 (MQFIDYAEIE…RWLRLELKLL (159 aa)) constitute an Obg domain. Residues 160 to 328 (AEVGIIGLPN…LLQIVWQLLD (169 aa)) enclose the OBG-type G domain. GTP is bound by residues 166 to 173 (GLPNAGKS), 191 to 195 (FTTLV), 213 to 216 (DIPG), 280 to 283 (NKMD), and 309 to 311 (SGV). Positions 173 and 193 each coordinate Mg(2+).

Belongs to the TRAFAC class OBG-HflX-like GTPase superfamily. OBG GTPase family. Monomer. The cofactor is Mg(2+).

The protein resides in the cytoplasm. Functionally, an essential GTPase which binds GTP, GDP and possibly (p)ppGpp with moderate affinity, with high nucleotide exchange rates and a fairly low GTP hydrolysis rate. Plays a role in control of the cell cycle, stress response, ribosome biogenesis and in those bacteria that undergo differentiation, in morphogenesis control. In Rippkaea orientalis (strain PCC 8801 / RF-1) (Cyanothece sp. (strain PCC 8801)), this protein is GTPase Obg.